The sequence spans 390 residues: Succinate--CoA ligase [ADP-forming] subunit beta (390 aa).

In terms of domain architecture, ATP-grasp spans 9-244 (KSLFQQYGIP…ISQEDVREAK (236 aa)). Positions 46, 99, 102, and 107 each coordinate ATP. Mg(2+) is bound by residues Asn199 and Asp213. Residues Asn264 and 321–323 (GIV) contribute to the substrate site.

Belongs to the succinate/malate CoA ligase beta subunit family. In terms of assembly, heterotetramer of two alpha and two beta subunits. The cofactor is Mg(2+).

The enzyme catalyses succinate + ATP + CoA = succinyl-CoA + ADP + phosphate. It catalyses the reaction GTP + succinate + CoA = succinyl-CoA + GDP + phosphate. The protein operates within carbohydrate metabolism; tricarboxylic acid cycle; succinate from succinyl-CoA (ligase route): step 1/1. Its function is as follows. Succinyl-CoA synthetase functions in the citric acid cycle (TCA), coupling the hydrolysis of succinyl-CoA to the synthesis of either ATP or GTP and thus represents the only step of substrate-level phosphorylation in the TCA. The beta subunit provides nucleotide specificity of the enzyme and binds the substrate succinate, while the binding sites for coenzyme A and phosphate are found in the alpha subunit. This Hydrogenovibrio crunogenus (strain DSM 25203 / XCL-2) (Thiomicrospira crunogena) protein is Succinate--CoA ligase [ADP-forming] subunit beta.